The chain runs to 253 residues: 4-phosphopantoate--beta-alanine ligase (253 aa).

ATP contacts are provided by residues Arg-17, Arg-39, 179-181 (DLN), 185-186 (RT), and 197-198 (NL).

The protein belongs to the archaeal phosphopantothenate synthetase family. Homodimer.

The catalysed reaction is (R)-4-phosphopantoate + beta-alanine + ATP = (R)-4'-phosphopantothenate + AMP + diphosphate + H(+). The protein operates within cofactor biosynthesis; coenzyme A biosynthesis. Catalyzes the condensation of (R)-4-phosphopantoate and beta-alanine to 4'-phosphopantothenate in the CoA biosynthesis pathway. The protein is 4-phosphopantoate--beta-alanine ligase of Methanosarcina mazei (strain ATCC BAA-159 / DSM 3647 / Goe1 / Go1 / JCM 11833 / OCM 88) (Methanosarcina frisia).